The sequence spans 448 residues: Asparagine--tRNA ligase (448 aa).

Belongs to the class-II aminoacyl-tRNA synthetase family. In terms of assembly, homodimer.

Its subcellular location is the cytoplasm. It catalyses the reaction tRNA(Asn) + L-asparagine + ATP = L-asparaginyl-tRNA(Asn) + AMP + diphosphate + H(+). In Streptococcus thermophilus (strain ATCC BAA-250 / LMG 18311), this protein is Asparagine--tRNA ligase.